Reading from the N-terminus, the 180-residue chain is NADH-quinone oxidoreductase subunit I (180 aa).

4Fe-4S ferredoxin-type domains are found at residues Leu50 to Thr80 and Glu90 to Asp119. [4Fe-4S] cluster contacts are provided by Cys60, Cys63, Cys66, Cys70, Cys99, Cys102, Cys105, and Cys109.

It belongs to the complex I 23 kDa subunit family. As to quaternary structure, NDH-1 is composed of 13 different subunits. Subunits NuoA, H, J, K, L, M, N constitute the membrane sector of the complex. Requires [4Fe-4S] cluster as cofactor.

It localises to the cell inner membrane. It catalyses the reaction a quinone + NADH + 5 H(+)(in) = a quinol + NAD(+) + 4 H(+)(out). Functionally, NDH-1 shuttles electrons from NADH, via FMN and iron-sulfur (Fe-S) centers, to quinones in the respiratory chain. The immediate electron acceptor for the enzyme in this species is believed to be ubiquinone. Couples the redox reaction to proton translocation (for every two electrons transferred, four hydrogen ions are translocated across the cytoplasmic membrane), and thus conserves the redox energy in a proton gradient. The protein is NADH-quinone oxidoreductase subunit I of Shigella dysenteriae serotype 1 (strain Sd197).